The sequence spans 444 residues: Cell wall mannoprotein PST1 (444 aa).

A signal peptide spans 1 to 19; the sequence is MQLHSLIASTALLITSALA. N-linked (GlcNAc...) asparagine glycans are attached at residues N57, N76, N83, N86, N196, N210, N228, N235, N242, N263, N268, N280, N292, N305, and N329. Composition is skewed to low complexity over residues 359-381 and 395-417; these read SVKLSSTSKSQSSQTTAKVSKSS and KAAASASSVSSSSASSSSSKSSK. Positions 359-418 are disordered; the sequence is SVKLSSTSKSQSSQTTAKVSKSSSKAEEKKFTSGDIKAAASASSVSSSSASSSSSKSSKG. N419 carries the GPI-anchor amidated asparagine lipid modification. A propeptide spans 420–444 (removed in mature form); it reads AAIMAPIGQTTPLVGLLTAIIMSIM.

This sequence belongs to the SPS2 family. Post-translationally, extensively N- and O-mannosylated.

It localises to the cell membrane. It is found in the secreted. Its subcellular location is the cell wall. Its function is as follows. Has a partially redundant function to ECM33 in cell wall integrity. May be involved in a repair mechanism activated in response to cell wall damage. This is Cell wall mannoprotein PST1 (PST1) from Saccharomyces cerevisiae (strain YJM789) (Baker's yeast).